Consider the following 229-residue polypeptide: MEGGSFGAGRAGAALDPVSFARRPQTLLRVASWVFSIAVFGPIVNEGYVNADSGPELRCVFNGNAGACRFGVALGLGAFLACSCFLLLDVRFQQISSVRDRRRAVLLDLGFSGLWSFLWFVGFCFLTNQWQRTAPGPGTAQAGDAARAVITFSFFSILSWVALTVKALQRFRLGTDMSLFATEQLGAGAGQTYPGYPVGSGVEGTDTYQSPPFTETLDTSPKGYQVPAY.

Met1 carries the N-acetylmethionine modification. The MARVEL domain occupies 20-172 (FARRPQTLLR…LTVKALQRFR (153 aa)). Transmembrane regions (helical) follow at residues 30-50 (VASWVFSIAVFGPIVNEGYVN), 70-90 (FGVALGLGAFLACSCFLLLDV), 105-125 (VLLDLGFSGLWSFLWFVGFCF), and 148-168 (AVITFSFFSILSWVALTVKAL).

This sequence belongs to the synaptogyrin family. In terms of assembly, interacts (via N-terminus) with SLC6A3 (via N-terminus). May interact with VMAT2.

The protein localises to the cytoplasmic vesicle. It localises to the secretory vesicle. It is found in the synaptic vesicle membrane. The protein resides in the synapse. Functionally, may play a role in regulated exocytosis. May indirectly regulate the activity of the plasma membrane dopamine transporter SLC6A3 and thereby regulate dopamine transport back from the synaptic cleft into the presynaptic terminal. This Bos taurus (Bovine) protein is Synaptogyrin-3.